Consider the following 125-residue polypeptide: Conopressin-conophysin, isoform 1 (125 aa).

The N-terminal stretch at 1 to 22 (MQMGRPTLLPCLLLLLVLSTQA) is a signal peptide. C23 and C28 form a disulfide bridge. Residue G31 is modified to Glycine amide. A propeptide spanning residues 32 to 39 (GKRDVHMI) is cleaved from the precursor. Intrachain disulfides connect C45–C85, C48–C59, C53–C75, C60–C65, C92–C112, C104–C124, and C113–C118.

Belongs to the vasopressin/oxytocin family. As to expression, expressed by the venom gland.

The protein resides in the secreted. In terms of biological role, targets vasopressin-oxytocin related receptors. This Conus monile (Necklace cone) protein is Conopressin-conophysin, isoform 1.